A 136-amino-acid polypeptide reads, in one-letter code: MEETVNNQETPETSEEETADEETVAVENTAAGKVLPSFGPGDTIKVHARIKEGDKERIQMFQGVVLKVKQAADGGNFTVRRISYGVGVERTFPFLSPNVTKVEVIKRGRVRRARLFYLRKLSGKAARIKEVKQTPS.

The interval Met-1–Thr-23 is disordered. The span at Glu-12 to Thr-23 shows a compositional bias: acidic residues.

The protein belongs to the bacterial ribosomal protein bL19 family.

Functionally, this protein is located at the 30S-50S ribosomal subunit interface and may play a role in the structure and function of the aminoacyl-tRNA binding site. This is Large ribosomal subunit protein bL19 from Dehalococcoides mccartyi (strain ATCC BAA-2266 / KCTC 15142 / 195) (Dehalococcoides ethenogenes (strain 195)).